The primary structure comprises 223 residues: DNA mismatch repair protein MutH (223 aa).

It belongs to the MutH family.

It localises to the cytoplasm. Its function is as follows. Sequence-specific endonuclease that cleaves unmethylated GATC sequences. It is involved in DNA mismatch repair. This Haemophilus influenzae (strain PittGG) protein is DNA mismatch repair protein MutH.